A 386-amino-acid polypeptide reads, in one-letter code: 3-ketoacyl-CoA thiolase (386 aa).

Cys-91 functions as the Acyl-thioester intermediate in the catalytic mechanism. Residues His-342 and Cys-372 each act as proton acceptor in the active site.

Belongs to the thiolase-like superfamily. Thiolase family. As to quaternary structure, heterotetramer of two alpha chains (FadB) and two beta chains (FadA).

Its subcellular location is the cytoplasm. The enzyme catalyses an acyl-CoA + acetyl-CoA = a 3-oxoacyl-CoA + CoA. It functions in the pathway lipid metabolism; fatty acid beta-oxidation. Functionally, catalyzes the final step of fatty acid oxidation in which acetyl-CoA is released and the CoA ester of a fatty acid two carbons shorter is formed. This chain is 3-ketoacyl-CoA thiolase, found in Pseudoalteromonas atlantica (strain T6c / ATCC BAA-1087).